The primary structure comprises 332 residues: tRNA U34 carboxymethyltransferase (332 aa).

Carboxy-S-adenosyl-L-methionine is bound by residues Lys96, Trp110, Lys115, Gly135, Leu186 to Glu187, Met204, Tyr208, and Arg323.

Belongs to the class I-like SAM-binding methyltransferase superfamily. CmoB family. As to quaternary structure, homotetramer.

It carries out the reaction carboxy-S-adenosyl-L-methionine + 5-hydroxyuridine(34) in tRNA = 5-carboxymethoxyuridine(34) in tRNA + S-adenosyl-L-homocysteine + H(+). Catalyzes carboxymethyl transfer from carboxy-S-adenosyl-L-methionine (Cx-SAM) to 5-hydroxyuridine (ho5U) to form 5-carboxymethoxyuridine (cmo5U) at position 34 in tRNAs. This chain is tRNA U34 carboxymethyltransferase, found in Hydrogenovibrio crunogenus (strain DSM 25203 / XCL-2) (Thiomicrospira crunogena).